A 422-amino-acid polypeptide reads, in one-letter code: MFPGSVIRKLSHSEEVFAQYEVFTSMTIQLRGVIDVDALSDAFDALLETHPVLASHLEQSSDGGWNLVADDLLHSGICVIDGTAATNGSPSGNAELRLDQSVSLLHLQLILREGGAELTLYLHHCMADGHHGAVLVDELFSRYTDAVTTGDPGPITPQPTPLSMEAVLAQRGIRKQGLSGAERFMSVMYAYEIPATETPAVLAHPGLPQAVPVTRLWLSKQQTSDLMAFGREHRLSLNAVVAAAILLTEWQLRNTPHVPIPYVYPVDLRFVLAPPVAPTEATNLLGAASYLAEIGPNTDIVDLASDIVATLRADLANGVIQQSGLHFGTAFEGTPPGLPPLVFCTDATSFPTMRTPPGLEIEDIKGQFYCSISVPLDLYSCAVYAGQLIIEHHGHIAEPGKSLEAIRSLLCTVPSEYGWIME.

The Proton acceptor role is filled by histidine 124.

The protein belongs to the acyltransferase PapA5 family. As to quaternary structure, monomer. Interacts directly with the acyl carrier protein (ACP) domain of the mycocerosic acid synthase (mas) protein.

It catalyses the reaction 2 a mycocerosyl-[mycocerosic acid synthase] + a phthiocerol = a dimycocerosyl phthiocerol + 2 holo-[mycocerosic acid synthase].. The catalysed reaction is 2 a mycocerosyl-[mycocerosic acid synthase] + a phthiodiolone = a dimycocerosyl phthiodiolone + 2 holo-[mycocerosic acid synthase].. It carries out the reaction 2 a mycocerosyl-[mycocerosic acid synthase] + a phenolphthiocerol = a dimycocerosyl phenolphthiocerol + 2 holo-[mycocerosic acid synthase].. Functionally, catalyzes diesterification of phthiocerol, phthiodiolone, and phenolphthiocerol with mycocerosic acids, the final step in the phthiocerol, phthiodiolone and phenolphthiocerol dimycocerosate esters (PDIM) synthesis. Can directly transfer the mycocerosate bound to the mycocerosic acid synthase (mas) onto the substrate alcohols. This is Phthiocerol/phthiodiolone dimycocerosyl transferase (papA5) from Mycobacterium tuberculosis (strain ATCC 25177 / H37Ra).